A 1665-amino-acid chain; its full sequence is Cortactin-binding protein 2 (1665 aa).

5 disordered regions span residues 1–23 (MATD…AGAT), 201–235 (EEKK…SEFD), 360–441 (ASHG…LHPG), 455–480 (GNAN…PTSR), and 499–617 (RFTS…PKPS). Residues 120 to 276 (KMQERMSTQL…EQLKRGNDNK (157 aa)) adopt a coiled-coil conformation. The span at 385-395 (GPSTGSTADLT) shows a compositional bias: polar residues. Position 499 is an asymmetric dimethylarginine (Arg-499). Residues 584–594 (TVASPPSSLPQ) are compositionally biased toward polar residues. ANK repeat units lie at residues 710-740 (GRPT…DINY), 744-773 (DGHS…QVDA), 777-806 (NGFT…NINH), 810-839 (GGQT…DRSI), 843-872 (DGWT…PAHG), and 914-944 (EGWT…EPER). The interval 1447 to 1484 (CSKKKGESGAWRKVSTSPRKKSSRFSSPTWNKPDLSEE) is disordered. At Ser-1526 the chain carries Phosphoserine. Residues 1544 to 1562 (SESDISKIADSRDDLRRFD) show a composition bias toward basic and acidic residues. Positions 1544–1648 (SESDISKIAD…RQIEINNNSK (105 aa)) are disordered. Composition is skewed to polar residues over residues 1564–1576 (PGNN…TVNN) and 1584–1604 (KEVS…QSKT). Low complexity predominate over residues 1626–1640 (SQNTKRSSSSSNTRQ).

Interacts with CTTN/cortactin SH3 domain. Interacts with STRN, STRN4/zinedin and MOB4/phocein; this interactions mediate the association with the STRIPAK core complex and may regulate dendritic spine distribution of the STRIPAK complex in hippocampal neurons. Activation of glutamate receptors weakens the interaction with STRN and STRN4.

Its subcellular location is the cytoplasm. The protein resides in the cell cortex. It localises to the cell projection. It is found in the dendritic spine. Its function is as follows. Regulates the dendritic spine distribution of CTTN/cortactin in hippocampal neurons, and thus controls dendritic spinogenesis and dendritic spine maintenance. Associates with the striatin-interacting phosphatase and kinase (STRIPAK) core complex to regulate dendritic spine distribution of the STRIPAK complex in hippocampal neurons. In Equus caballus (Horse), this protein is Cortactin-binding protein 2 (CTTNBP2).